A 427-amino-acid polypeptide reads, in one-letter code: MPALVLLGAQWGDEGKGKATDLLGGSVDYVVRYQGGNNAGHTVVVGDQKYALHLLPSGILSPGCTPVIGNGVVVDPAVLLSELSGLNERGVDTSKLLISGNAHLITPYNVTLDKVTERFLGKRKIGTTGRGIGPTYADKINRVGIRVQDLYDESILEQKVEAALEQKNQLLAKVFNRRAIEAGKVVEDMLQYAEQIKPFVADTTLILNDAIDEGKVVLFEGGQGTLLDVDHGTYPFVTSSNPTAGGACTGAGVGPTKISRVIGILKAYTTRVGAGPFPTELHDEDGEALRRIGGERGVTTGRDRRCGWFDAPIARYATRVNGLTDFFLTKLDVLTGWERIPVCVAYEIDGKRVEELPYNQTDFHHAKPIYENLPGWSEDITKAKTFSDLPKNAQAYVKALEEMSGAPISAIGVGPGRTETIEINSFL.

GTP-binding positions include 12–18 and 40–42; these read GDEGKGK and GHT. Asp13 functions as the Proton acceptor in the catalytic mechanism. The Mg(2+) site is built by Asp13 and Gly40. IMP contacts are provided by residues 13 to 16, 38 to 41, Thr128, Arg142, Gln223, Thr238, and Arg302; these read DEGK and NAGH. His41 acts as the Proton donor in catalysis. 298–304 lines the substrate pocket; the sequence is VTTGRDR. Residues Arg304, 330–332, and 412–414 each bind GTP; these read KLD and GVG.

It belongs to the adenylosuccinate synthetase family. As to quaternary structure, homodimer. Mg(2+) serves as cofactor.

It localises to the cytoplasm. It catalyses the reaction IMP + L-aspartate + GTP = N(6)-(1,2-dicarboxyethyl)-AMP + GDP + phosphate + 2 H(+). It participates in purine metabolism; AMP biosynthesis via de novo pathway; AMP from IMP: step 1/2. Its function is as follows. Plays an important role in the de novo pathway of purine nucleotide biosynthesis. Catalyzes the first committed step in the biosynthesis of AMP from IMP. The polypeptide is Adenylosuccinate synthetase (Streptomyces griseus subsp. griseus (strain JCM 4626 / CBS 651.72 / NBRC 13350 / KCC S-0626 / ISP 5235)).